A 262-amino-acid polypeptide reads, in one-letter code: Small ribosomal subunit protein uS2 (262 aa).

The segment at 236-262 (AGGAAEAPAAEDVQTEEAAAPEADSAE) is disordered.

Belongs to the universal ribosomal protein uS2 family.

The polypeptide is Small ribosomal subunit protein uS2 (Psychrobacter sp. (strain PRwf-1)).